A 219-amino-acid polypeptide reads, in one-letter code: Thymidylate kinase (219 aa).

7–14 (GIDGAGKS) lines the ATP pocket.

Belongs to the thymidylate kinase family.

The enzyme catalyses dTMP + ATP = dTDP + ADP. Its function is as follows. Phosphorylation of dTMP to form dTDP in both de novo and salvage pathways of dTTP synthesis. The polypeptide is Thymidylate kinase (Chlorobium limicola (strain DSM 245 / NBRC 103803 / 6330)).